The primary structure comprises 232 residues: Orotidine 5'-phosphate decarboxylase (232 aa).

Residues Asp-11, Lys-33, 60–69 (DLKFHDIPTT), Thr-120, Arg-181, Gln-191, Gly-211, and Arg-212 each bind substrate. The Proton donor role is filled by Lys-62.

Belongs to the OMP decarboxylase family. Type 1 subfamily. As to quaternary structure, homodimer.

The enzyme catalyses orotidine 5'-phosphate + H(+) = UMP + CO2. The protein operates within pyrimidine metabolism; UMP biosynthesis via de novo pathway; UMP from orotate: step 2/2. Its function is as follows. Catalyzes the decarboxylation of orotidine 5'-monophosphate (OMP) to uridine 5'-monophosphate (UMP). In Tolumonas auensis (strain DSM 9187 / NBRC 110442 / TA 4), this protein is Orotidine 5'-phosphate decarboxylase.